The chain runs to 217 residues: Tegument protein BKRF4 (217 aa).

The tract at residues 1-217 (MAMFLKSRGV…GNNNYNWPWL (217 aa)) is disordered. Residues 32–42 (YTLGSQASQSI) show a composition bias toward polar residues. The span at 43 to 79 (QEEDVSDTDESDYSDEDEEIDLEEEYPSDEDPSEGSD) shows a compositional bias: acidic residues. An interaction with host histones H3/H4 region spans residues 63 to 64 (DL). Positions 81 to 84 (DPSW) are interaction with host H2A/H2B. Residues 89–102 (SDESDYSESDEDEA) show a composition bias toward acidic residues. Residues 106–132 (SQASRSSRVSPSTQQSSGLTPTPSFSR) are compositionally biased toward low complexity. The segment covering 136–145 (RAPPRPPAPA) has biased composition (pro residues). Residues 208 to 217 (GNNNYNWPWL) are compositionally biased toward polar residues.

This sequence belongs to the lymphocryptovirus BKRF4 family. As to quaternary structure, forms a complex with the host H3/H4 dimer and histone chaperone ASF1. Also forms a complex with host H2A/H2B dimer. Interacts (via C-terminus) with BGLF2; this interaction is important for infectious virion production.

It localises to the virion tegument. The protein localises to the host nucleus. Its subcellular location is the host cytoplasm. The protein resides in the host perinuclear region. Its function is as follows. Histone-binding protein that binds to histones H2A/H2B, H3/H4 and cellular chromatin to overcome the host DNA damage response triggered by the viral genome ends. Interferes with histone ubiquitination and recruitment of repair proteins. This chain is Tegument protein BKRF4, found in Epstein-Barr virus (strain AG876) (HHV-4).